Here is a 439-residue protein sequence, read N- to C-terminus: Elongation factor Tu, mitochondrial (439 aa).

One can recognise a tr-type G domain in the interval 51 to 246; the sequence is KPHVNIGTIG…AVDSYITLPE (196 aa). Residues 60 to 67 are G1; the sequence is GHVDHGKT. 60–67 is a binding site for GTP; it reads GHVDHGKT. The segment at 101 to 105 is G2; that stretch reads GITIS. The G3 stretch occupies residues 122–125; it reads DCPG. Residues 122–126 and 177–180 each bind GTP; these read DCPGH and NKVD. Residues 177-180 form a G4 region; it reads NKVD. The interval 214-216 is G5; the sequence is SAL.

Belongs to the TRAFAC class translation factor GTPase superfamily. Classic translation factor GTPase family. EF-Tu/EF-1A subfamily.

It localises to the mitochondrion. This protein promotes the GTP-dependent binding of aminoacyl-tRNA to the A-site of ribosomes during protein biosynthesis. The chain is Elongation factor Tu, mitochondrial (tuf1) from Schizosaccharomyces pombe (strain 972 / ATCC 24843) (Fission yeast).